Reading from the N-terminus, the 175-residue chain is Small ribosomal subunit protein uS5 (175 aa).

In terms of domain architecture, S5 DRBM spans 19–82 (WQERVIQIRR…ADGKKHLIDI (64 aa)).

It belongs to the universal ribosomal protein uS5 family. As to quaternary structure, part of the 30S ribosomal subunit. Contacts proteins S4 and S8.

Functionally, with S4 and S12 plays an important role in translational accuracy. Located at the back of the 30S subunit body where it stabilizes the conformation of the head with respect to the body. This chain is Small ribosomal subunit protein uS5, found in Nostoc punctiforme (strain ATCC 29133 / PCC 73102).